Here is a 409-residue protein sequence, read N- to C-terminus: Arginine deiminase (409 aa).

Cys-399 serves as the catalytic Amidino-cysteine intermediate.

This sequence belongs to the arginine deiminase family.

The protein resides in the cytoplasm. The catalysed reaction is L-arginine + H2O = L-citrulline + NH4(+). It functions in the pathway amino-acid degradation; L-arginine degradation via ADI pathway; carbamoyl phosphate from L-arginine: step 1/2. The sequence is that of Arginine deiminase (arcA) from Borreliella afzelii (Borrelia afzelii).